A 122-amino-acid chain; its full sequence is MKEIIAIIRPNKINRTKEVLDALGFSSMTANAVFGRGRQKAIVGEVTFAIQNKDLREEEGSMRYIPKRMISLVVPDEDASLVVESIMKVNKTGQIGDGKIFVCPIEDAVRVRTKESGEDAIL.

Belongs to the P(II) protein family.

In terms of biological role, could be involved in the regulation of nitrogen fixation. The polypeptide is Nitrogen fixation nifHD region GlnB-like protein 2 (glnBB) (Methanobacterium ivanovii).